The sequence spans 450 residues: Sorting nexin-4 (450 aa).

At M1 the chain carries N-acetylmethionine. A disordered region spans residues 1-46; it reads MEQAPPDPERQLQPAPLEPLGSPDAGLGAAVGKEAEGAGEESSGVD. The residue at position 22 (S22) is a Phosphoserine. One can recognise a PX domain in the interval 61-187; it reads SVSEAEKRTG…YLFLTQEGNW (127 aa). Residues R106, S108, K132, and R154 each contribute to the a 1,2-diacyl-sn-glycero-3-phospho-(1D-myo-inositol-3-phosphate) site.

Belongs to the sorting nexin family. Heterodimer; heterodimerizes with SNX7 or SNX30. Interacts with WWC1/KIBRA. Identified in a complex with WWC1/KIBRA and dynein components DYNLL1 and DYNC1I2. Interacts with BIN1.

It localises to the early endosome membrane. In terms of biological role, involved in the regulation of endocytosis and in several stages of intracellular trafficking. Plays a role in recycling endocytosed transferrin receptor and prevent its degradation. Involved in autophagosome assembly by regulating trafficking and recycling of phospholipid scramblase ATG9A. In Homo sapiens (Human), this protein is Sorting nexin-4.